Reading from the N-terminus, the 354-residue chain is 5,10-methenyltetrahydromethanopterin hydrogenase (354 aa).

This sequence belongs to the HMD family.

It catalyses the reaction 5,10-methenyl-5,6,7,8-tetrahydromethanopterin + H2 = 5,10-methylenetetrahydromethanopterin + H(+). It functions in the pathway one-carbon metabolism; methanogenesis from CO(2); 5,10-methylene-5,6,7,8-tetrahydromethanopterin from 5,10-methenyl-5,6,7,8-tetrahydromethanopterin (hydrogen route): step 1/1. In terms of biological role, catalyzes the reversible reduction of methenyl-H(4)MPT(+) to methylene-H(4)MPT. This is 5,10-methenyltetrahydromethanopterin hydrogenase from Methanococcus maripaludis (strain C5 / ATCC BAA-1333).